Consider the following 493-residue polypeptide: Phenmedipham hydrolase (493 aa).

Residue S188 is the Acyl-ester intermediate of the active site. Residues E307 and H402 each act as charge relay system in the active site.

This sequence belongs to the type-B carboxylesterase/lipase family. As to quaternary structure, monomer.

Functionally, may degrade the phenylcarbamate herbicides phenmedipham and desmedipham cometabolically by hydrolyzing their central carbamate linkages. Conveys resistance to the herbicide phenmedipham. The chain is Phenmedipham hydrolase (pcd) from Pseudarthrobacter oxydans (Arthrobacter oxydans).